The primary structure comprises 119 residues: Large ribosomal subunit protein uL18 (119 aa).

The segment at 1 to 25 is disordered; sequence MITKIDKNKVRKKRHARVRSKISGT. Basic residues predominate over residues 9–20; sequence KVRKKRHARVRS.

It belongs to the universal ribosomal protein uL18 family. In terms of assembly, part of the 50S ribosomal subunit; part of the 5S rRNA/L5/L18/L25 subcomplex. Contacts the 5S and 23S rRNAs.

Functionally, this is one of the proteins that bind and probably mediate the attachment of the 5S RNA into the large ribosomal subunit, where it forms part of the central protuberance. The protein is Large ribosomal subunit protein uL18 of Listeria monocytogenes serotype 4b (strain CLIP80459).